Here is a 230-residue protein sequence, read N- to C-terminus: Ion-translocating oxidoreductase complex subunit E (230 aa).

Transmembrane regions (helical) follow at residues 18-38 (ALVQLLGMCPLLAVTSTATNA), 39-59 (LGLGLATTLVLTLTNLTISAL), 63-83 (TPAEIRIPIYVMIIASVVSAV), 86-106 (LINAYAFGLYQSLGIFIPLIV), 125-145 (ALSALDGFSIGMGATGAMFVL), and 182-202 (PFLLAMLPPGAFIGLGLMLAV).

Belongs to the NqrDE/RnfAE family. As to quaternary structure, the complex is composed of six subunits: RnfA, RnfB, RnfC, RnfD, RnfE and RnfG.

It is found in the cell inner membrane. Part of a membrane-bound complex that couples electron transfer with translocation of ions across the membrane. The sequence is that of Ion-translocating oxidoreductase complex subunit E from Citrobacter koseri (strain ATCC BAA-895 / CDC 4225-83 / SGSC4696).